Reading from the N-terminus, the 345-residue chain is Phosphoribosylformylglycinamidine cyclo-ligase (345 aa).

It belongs to the AIR synthase family.

It localises to the cytoplasm. The enzyme catalyses 2-formamido-N(1)-(5-O-phospho-beta-D-ribosyl)acetamidine + ATP = 5-amino-1-(5-phospho-beta-D-ribosyl)imidazole + ADP + phosphate + H(+). Its pathway is purine metabolism; IMP biosynthesis via de novo pathway; 5-amino-1-(5-phospho-D-ribosyl)imidazole from N(2)-formyl-N(1)-(5-phospho-D-ribosyl)glycinamide: step 2/2. This Pasteurella multocida (strain Pm70) protein is Phosphoribosylformylglycinamidine cyclo-ligase.